A 442-amino-acid chain; its full sequence is D-galactonate dehydratase family member SSLG_02014 (442 aa).

His-161 provides a ligand contact to substrate. Catalysis depends on Tyr-197, which acts as the Proton donor/acceptor. Asp-246 contributes to the Mg(2+) binding site. The Proton donor/acceptor role is filled by His-248. Mg(2+) contacts are provided by Glu-272 and Glu-298. 5 residues coordinate substrate: Glu-298, Arg-319, His-348, Asp-352, and Glu-375.

This sequence belongs to the mandelate racemase/muconate lactonizing enzyme family. GalD subfamily. The cofactor is Mg(2+).

The enzyme catalyses D-mannonate = 2-dehydro-3-deoxy-D-gluconate + H2O. Has low D-mannonate dehydratase activity (in vitro), suggesting that this is not a physiological substrate and that it has no significant role in D-mannonate degradation in vivo. Has no detectable activity with a panel of 70 other acid sugars (in vitro). The sequence is that of D-galactonate dehydratase family member SSLG_02014 from Streptomyces sp. (strain SPB78).